A 208-amino-acid chain; its full sequence is Putative chemokine-related protein FP248 (208 aa).

An N-terminal signal peptide occupies residues 1–23; that stretch reads MGTGGSLLCGCSLVLSCLCPSAS. Residue N29 is glycosylated (N-linked (GlcNAc...) asparagine).

It localises to the secreted. This Homo sapiens (Human) protein is Putative chemokine-related protein FP248.